The sequence spans 194 residues: Imidazoleglycerol-phosphate dehydratase (194 aa).

Belongs to the imidazoleglycerol-phosphate dehydratase family.

The protein resides in the cytoplasm. It carries out the reaction D-erythro-1-(imidazol-4-yl)glycerol 3-phosphate = 3-(imidazol-4-yl)-2-oxopropyl phosphate + H2O. Its pathway is amino-acid biosynthesis; L-histidine biosynthesis; L-histidine from 5-phospho-alpha-D-ribose 1-diphosphate: step 6/9. This Bacillus cereus (strain AH820) protein is Imidazoleglycerol-phosphate dehydratase.